The sequence spans 144 residues: UPF0102 protein BPSL3274 (144 aa).

The segment at 1–28 (MCHAREASPGTGEPEAAPRDNFPREAGS) is disordered. Basic and acidic residues predominate over residues 16 to 28 (AAPRDNFPREAGS).

It belongs to the UPF0102 family.

This is UPF0102 protein BPSL3274 from Burkholderia pseudomallei (strain K96243).